Consider the following 217-residue polypeptide: MSIGLIGRKCGMTRIFTETGSSIPVTVVEVILNRITQVKTVETDGYRAFQVAYGKKSSARVNKPLAGHYSKAAVEAGNALREFRLGNEELTEAKAGDELKVDIFKEGQVVDVRGLTRGKGFAGTVKRHNFRTQDATHGNSLSHRAPGSIGQCQTPGRVWKGKKMAGQLGNVYCTVQSQEIIKVDVERNLLLIKGALPGAPGGEVIITQSSKKRKEDK.

The segment at 135 to 154 (ATHGNSLSHRAPGSIGQCQT) is disordered. N5-methylglutamine is present on glutamine 153.

This sequence belongs to the universal ribosomal protein uL3 family. As to quaternary structure, part of the 50S ribosomal subunit. Forms a cluster with proteins L14 and L19. Methylated by PrmB.

Its function is as follows. One of the primary rRNA binding proteins, it binds directly near the 3'-end of the 23S rRNA, where it nucleates assembly of the 50S subunit. The sequence is that of Large ribosomal subunit protein uL3 from Coxiella burnetii (strain CbuG_Q212) (Coxiella burnetii (strain Q212)).